Consider the following 241-residue polypeptide: ATP synthase subunit a (241 aa).

5 helical membrane passes run 30 to 50 (GQVF…VVVG), 91 to 111 (FIGT…LVPW), 128 to 148 (INTT…AGLS), 193 to 213 (LVVA…VMFL), and 214 to 234 (GLFT…YYIG).

Belongs to the ATPase A chain family. F-type ATPases have 2 components, CF(1) - the catalytic core - and CF(0) - the membrane proton channel. CF(1) has five subunits: alpha(3), beta(3), gamma(1), delta(1), epsilon(1). CF(0) has four main subunits: a, b, b' and c.

The protein localises to the cellular thylakoid membrane. Functionally, key component of the proton channel; it plays a direct role in the translocation of protons across the membrane. The sequence is that of ATP synthase subunit a from Prochlorococcus marinus (strain MIT 9211).